Consider the following 685-residue polypeptide: Iron(3+)-hydroxamate import system permease protein FhuB (685 aa).

Transmembrane regions (helical) follow at residues 35 to 55 (ALLL…NFSV), 87 to 107 (LAIS…FQQV), 120 to 140 (VATG…PGAL), 143 to 163 (QFAA…VAWG), 172 to 192 (ILAG…LVIF), 222 to 242 (QLLG…LMGL), 265 to 285 (AIVL…IGLF), 302 to 322 (LMLA…IILW), 328 to 348 (MEVS…LWLL), 373 to 393 (LAFA…ALSF), 416 to 436 (WPRI…GCII), 456 to 476 (AAFG…GWLL), 479 to 499 (GSLG…RGGF), 504 to 524 (MLLA…MLQA), 553 to 573 (AIVM…LTIL), 592 to 612 (IALL…IGPL), 632 to 652 (MPHM…ADWC), and 660 to 680 (YQIP…IYLL).

It belongs to the binding-protein-dependent transport system permease family. FecCD subfamily. As to quaternary structure, the complex is composed of two ATP-binding proteins (FhuC), a transmembrane protein (FhuB) and a solute-binding protein (FhuD).

Its subcellular location is the cell inner membrane. Its function is as follows. Part of the ABC transporter complex FhuCDB involved in iron(3+)-hydroxamate import. Responsible for the translocation of the substrate across the membrane. Involved in ferrioxamine-mediated iron(III) utilization. This is Iron(3+)-hydroxamate import system permease protein FhuB (fhuB) from Salmonella typhimurium (strain LT2 / SGSC1412 / ATCC 700720).